The chain runs to 559 residues: Glycerol kinase (559 aa).

Thr-20 contributes to the ADP binding site. Positions 20, 21, and 22 each coordinate ATP. Sn-glycerol 3-phosphate is bound at residue Thr-20. ADP is bound at residue Arg-24. The sn-glycerol 3-phosphate site is built by Arg-94, Glu-95, and Tyr-148. Residues Arg-94, Glu-95, and Tyr-148 each coordinate glycerol. Gly-252 contacts beta-D-fructose 1,6-bisphosphate. Asp-265 serves as a coordination point for sn-glycerol 3-phosphate. Asp-265 and Gln-266 together coordinate glycerol. 4 residues coordinate ADP: Thr-287, Gly-332, Gly-433, and Asn-437. The ATP site is built by Thr-287, Gly-332, and Gly-433. Residues 532 to 552 (IFCSLPLGFFIVSSMVMLIGA) traverse the membrane as a helical segment.

This sequence belongs to the FGGY kinase family. Widely expressed in fetal and adult tissues. As to expression, the sole isoform expressed in adult liver and kidney.

It is found in the mitochondrion outer membrane. The protein resides in the nucleus. It localises to the cytoplasm. The protein localises to the cytosol. The catalysed reaction is glycerol + ATP = sn-glycerol 3-phosphate + ADP + H(+). Its pathway is polyol metabolism; glycerol degradation via glycerol kinase pathway; sn-glycerol 3-phosphate from glycerol: step 1/1. Its activity is regulated as follows. Potassium and magnesium-dependent. Functionally, kinase that plays a key role in glycerol metabolism, catalyzing its phosphorylation to produce sn-glycerol 3-phosphate. Sn-glycerol 3-phosphate is a crucial intermediate in various metabolic pathways, such as the synthesis of glycerolipids and triglycerides, glycogenesis, glycolysis and gluconeogenesis. In Homo sapiens (Human), this protein is Glycerol kinase.